Consider the following 289-residue polypeptide: 3-methyl-2-oxobutanoate hydroxymethyltransferase (289 aa).

Residues 1–15 (MSTTFQLDTSTSRAN) show a composition bias toward polar residues. The interval 1 to 20 (MSTTFQLDTSTSRANPTPAP) is disordered. Residues aspartate 67 and aspartate 106 each coordinate Mg(2+). Residues 67–68 (DS), aspartate 106, and lysine 136 contribute to the 3-methyl-2-oxobutanoate site. A Mg(2+)-binding site is contributed by glutamate 138. Glutamate 205 functions as the Proton acceptor in the catalytic mechanism.

It belongs to the PanB family. Homodecamer; pentamer of dimers. Mg(2+) is required as a cofactor.

The protein localises to the cytoplasm. The catalysed reaction is 3-methyl-2-oxobutanoate + (6R)-5,10-methylene-5,6,7,8-tetrahydrofolate + H2O = 2-dehydropantoate + (6S)-5,6,7,8-tetrahydrofolate. It participates in cofactor biosynthesis; (R)-pantothenate biosynthesis; (R)-pantoate from 3-methyl-2-oxobutanoate: step 1/2. Catalyzes the reversible reaction in which hydroxymethyl group from 5,10-methylenetetrahydrofolate is transferred onto alpha-ketoisovalerate to form ketopantoate. The polypeptide is 3-methyl-2-oxobutanoate hydroxymethyltransferase (Novosphingobium aromaticivorans (strain ATCC 700278 / DSM 12444 / CCUG 56034 / CIP 105152 / NBRC 16084 / F199)).